Consider the following 124-residue polypeptide: MARLVGVDLPRDKRMEIALTYIYGIGRTRSNEILAATGIDKNMRTKDLTDDQVTVLRDYIEGNLKVEGDLRREVQADIRRKIEIGCYQGLRHRRGLPVRGQRTKTNARTRKGPKRTIAGKKKAR.

The disordered stretch occupies residues 95 to 124; sequence GLPVRGQRTKTNARTRKGPKRTIAGKKKAR.

The protein belongs to the universal ribosomal protein uS13 family. Part of the 30S ribosomal subunit. Forms a loose heterodimer with protein S19. Forms two bridges to the 50S subunit in the 70S ribosome.

Located at the top of the head of the 30S subunit, it contacts several helices of the 16S rRNA. In the 70S ribosome it contacts the 23S rRNA (bridge B1a) and protein L5 of the 50S subunit (bridge B1b), connecting the 2 subunits; these bridges are implicated in subunit movement. Contacts the tRNAs in the A and P-sites. This chain is Small ribosomal subunit protein uS13, found in Mycolicibacterium smegmatis (strain ATCC 700084 / mc(2)155) (Mycobacterium smegmatis).